The sequence spans 244 residues: MLPFWIALQFLSSLPVRLSGMPEPREMGRSLLCYPLVGLLFGLLLWLASHLLQGAPAPLHAALLLTLWVLLSGALHLDGLADSADAWLGGFGDRERTLKIMKDPRSGPIAVVTLVLVLLLKFCALWVLVERGAGALLVLAPVVGRAAMLGLFLGTPYVRPGGLGQALAEHLPRQTAGWVLLGSLLLCLLLGGWSAIWPMALALGVFLWLRRLMCQRLGGTTGDTAGAMLELLELTVVLGLALAT.

The next 5 membrane-spanning stretches (helical) occupy residues 31–51 (LLCY…ASHL), 55–75 (APAP…SGAL), 109–129 (IAVV…WVLV), 133–153 (AGAL…GLFL), and 188–208 (LLLG…VFLW).

Belongs to the CobS family. Requires Mg(2+) as cofactor.

The protein resides in the cell inner membrane. The enzyme catalyses alpha-ribazole + adenosylcob(III)inamide-GDP = adenosylcob(III)alamin + GMP + H(+). It catalyses the reaction alpha-ribazole 5'-phosphate + adenosylcob(III)inamide-GDP = adenosylcob(III)alamin 5'-phosphate + GMP + H(+). It participates in cofactor biosynthesis; adenosylcobalamin biosynthesis; adenosylcobalamin from cob(II)yrinate a,c-diamide: step 7/7. Joins adenosylcobinamide-GDP and alpha-ribazole to generate adenosylcobalamin (Ado-cobalamin). Also synthesizes adenosylcobalamin 5'-phosphate from adenosylcobinamide-GDP and alpha-ribazole 5'-phosphate. The protein is Adenosylcobinamide-GDP ribazoletransferase of Pseudomonas putida (strain W619).